A 289-amino-acid polypeptide reads, in one-letter code: 4-diphosphocytidyl-2-C-methyl-D-erythritol kinase (289 aa).

The active site involves Lys-11. Residue 93–103 (PLAAGLAGGSA) coordinates ATP. The active site involves Asp-135.

It belongs to the GHMP kinase family. IspE subfamily.

The catalysed reaction is 4-CDP-2-C-methyl-D-erythritol + ATP = 4-CDP-2-C-methyl-D-erythritol 2-phosphate + ADP + H(+). It functions in the pathway isoprenoid biosynthesis; isopentenyl diphosphate biosynthesis via DXP pathway; isopentenyl diphosphate from 1-deoxy-D-xylulose 5-phosphate: step 3/6. Functionally, catalyzes the phosphorylation of the position 2 hydroxy group of 4-diphosphocytidyl-2C-methyl-D-erythritol. In Thermoanaerobacter pseudethanolicus (strain ATCC 33223 / 39E) (Clostridium thermohydrosulfuricum), this protein is 4-diphosphocytidyl-2-C-methyl-D-erythritol kinase.